We begin with the raw amino-acid sequence, 665 residues long: UvrABC system protein C (665 aa).

Residues 16 to 95 (ESPGVYRFRD…IKQYDPRFNV (80 aa)) enclose the GIY-YIG domain. A UVR domain is found at 208–243 (DLMVRRLEREMADASAELEFERAARLRDDLAALRRA). The interval 470 to 507 (EAGVESAGDPATPAGPASTGPGVPDEPRVGTLVDPTTG) is disordered. Over residues 475 to 491 (SAGDPATPAGPASTGPG) the composition is skewed to low complexity.

The protein belongs to the UvrC family. In terms of assembly, interacts with UvrB in an incision complex.

It localises to the cytoplasm. Its function is as follows. The UvrABC repair system catalyzes the recognition and processing of DNA lesions. UvrC both incises the 5' and 3' sides of the lesion. The N-terminal half is responsible for the 3' incision and the C-terminal half is responsible for the 5' incision. This Salinispora tropica (strain ATCC BAA-916 / DSM 44818 / JCM 13857 / NBRC 105044 / CNB-440) protein is UvrABC system protein C.